A 130-amino-acid polypeptide reads, in one-letter code: Small ribosomal subunit protein bS6 (130 aa).

Residues V96–E130 are disordered. The span at K104 to D118 shows a compositional bias: basic and acidic residues. Over residues R119–E130 the composition is skewed to acidic residues.

It belongs to the bacterial ribosomal protein bS6 family.

Binds together with bS18 to 16S ribosomal RNA. This is Small ribosomal subunit protein bS6 from Shewanella denitrificans (strain OS217 / ATCC BAA-1090 / DSM 15013).